Consider the following 416-residue polypeptide: Chromate transport protein (416 aa).

A disordered region spans residues 1–21 (MSVANEESYRPSKATDATTEA). Transmembrane regions (helical) follow at residues 99–119 (LGGVLAGLGFMLPGFLLMFAL), 128–148 (FVGTALGAAFLGVQAAVIALI), 160–177 (LLDRWLWVIAIVCALAAI), 181–198 (DFWITLPAGGLVYALLVL), 204–224 (ALLVTLAAVALAAAVALWAAP), 237–257 (ASVLLIFASGLKAGLLTFGGA), 283–303 (LALSGVLPAPLIIFATFVGYV), 308–328 (IGAVAMTVGVFLPAFAFSLIF), 341–361 (LHAFLDGVAAGVVGLIGATTI), 371–391 (VPSLTVGMSIFAAGLAFLYAW), and 395–415 (LNVVVVILAAGLAGWLVFPNQ).

Belongs to the chromate ion transporter (CHR) (TC 2.A.51) family.

Its subcellular location is the cell inner membrane. Its function is as follows. This protein reduces chromate accumulation and is essential for chromate resistance. The protein is Chromate transport protein of Pseudomonas aeruginosa.